We begin with the raw amino-acid sequence, 789 residues long: MSHHSPPPPKHKGEHKGHGLPRGSERGSSSRGKDRSASVSNSVPMPAGGKASRTNCPPPAPQKTANRLINEKSPYLLQHAHNPVDWYPWGQEAFDKAKKENKPIFLSVGYSTCHWCHMMEEESFQNEEIGHLLNENFVSVMVDREERPDVDKVYMTFVQATSSGGGWPMNVWLTPSLQPFVGGTYFPPEDGLTRVGFRTVLMRICDQWKQNKNTLLENSQRVTTALLARSEISVGDRQLPPSAATMNSRCFQQLDEGYDEEYGGFAEAPKFPTPVILNFLFSYWLSHRVTQDGSRAQQMALHTLKMMANGGIRDHVGQGFHRYSTDRQWHIPHFEKMLYDQAQLSVVYCQAFQISGDEFFSDVAKGILQYVTRNLSHRSGGFYSAEDADSPPERGVKPQEGALYLWTVKEVQQLLPEPVGGASEPLTSGQLLMKHYGLSEAGNINPTQDVNGEMHGQNVLTVRDSLELTGARYGLEVEAVRALLNTGLEKLFQARKHRPKAHLDNKMLAAWNGLMVSGFAVAGSVLGMEKLVTQATNGAKFLKRHMFDVSSGRLKRTCYAGAGGTVEQSNPPCWGFLEDYAFVVRGLLDLYEASQESSWLEWALRLQDIQDKLFWDSHGGGYFCSEAELGTDLPLRLKDDQDGAEPSANSVSAHNLLRLHGLTGHKDWMDKCVCLLTAFSERMRRVPVALPEMVRALSAQQQTLKQIVICGDPQAKDTKALLQCVHSIYIPNKVLILADGDPSSFLSRQLPFLSNLRRVEDRATVYIFENQACSMPITDPCELRKLLHQ.

A compositionally biased stretch (basic residues) spans 1-19; that stretch reads MSHHSPPPPKHKGEHKGHG. Residues 1-65 are disordered; that stretch reads MSHHSPPPPK…CPPPAPQKTA (65 aa). Phosphoserine is present on residues Ser5 and Ser652.

In terms of tissue distribution, testis-specific and age-dependent (at protein level). Highly expressed. Expressed in round spermatids located in the inner half-layer of the seminiferous epithelium as well as in early elongated spermatids having cytoplasmic protrusions into the tubular lumen.

It is found in the secreted. May play a role in fertility regulation. This chain is Spermatogenesis-associated protein 20 (Spata20), found in Rattus norvegicus (Rat).